We begin with the raw amino-acid sequence, 446 residues long: Baeyer-Villiger oxidase mdpL (446 aa).

This sequence belongs to the AflY oxidoreductase family. NADPH serves as cofactor.

It functions in the pathway secondary metabolite biosynthesis. Baeyer-Villiger oxidase; part of the gene cluster that mediates the biosynthesis of monodictyphenone, a prenyl xanthone derivative. The pathway begins with the synthesis of atrochrysone thioester by the polyketide synthase (PKS) mdpG. The atrochrysone carboxyl ACP thioesterase mdpF then breaks the thioester bond and releases the atrochrysone carboxylic acid from mdpG. The atrochrysone carboxylic acid is then converted to atrochrysone which is further transformed into emodin anthrone. The next step is performed by the anthrone oxygenase mdpH that catalyzes the oxidation of emodinanthrone to emodin. Emodin is further modified to yield monodictyphenone via several steps involving mdpB, mdpC mdpJ, mdpK and mdpL. These enzymes with xptA, xptB and xptC are also proposed to be involved in the synthesis of shamixanthone from emodin. Especially, direct reduction of emodin by the short chain dehydrogenase mdpC followed by dehydration catalyzed by the scytalone dehydratase-like protein mdpB gives loss of oxygen and formation of chrysophanol intermediate in two simple steps. This Emericella nidulans (strain FGSC A4 / ATCC 38163 / CBS 112.46 / NRRL 194 / M139) (Aspergillus nidulans) protein is Baeyer-Villiger oxidase mdpL.